The following is a 398-amino-acid chain: Thyrotropin-releasing hormone receptor (398 aa).

Residues 1-28 (MENETGSELNQTQLQPRAVVALEYQVVT) are Extracellular-facing. N3 and N10 each carry an N-linked (GlcNAc...) asparagine glycan. The helical transmembrane segment at 29–51 (ILLVLIICGLGIVGNIMVVLVVM) threads the bilayer. Residues 52–61 (RTKHMRTPTN) lie on the Cytoplasmic side of the membrane. A helical membrane pass occupies residues 62-83 (CYLVSLAVADLMVLVAAGLPNI). Topologically, residues 84–99 (TDSIYGSWVYGYVGCL) are extracellular. C98 and C179 are disulfide-bonded. Residues 100 to 121 (CITYLQYLGINASSCSITAFTI) traverse the membrane as a helical segment. The Cytoplasmic segment spans residues 122–144 (ERYIAICHPIKAQFLCTFSRAKK). Residues 145–168 (IIIFVWAFTSIYCMLWFFLLDLNI) form a helical membrane-spanning segment. At 169 to 193 (STYKDAIVVSCGYKISRNYYSPIYL) the chain is on the extracellular side. A helical membrane pass occupies residues 194–215 (MDFGVFYVVPMILATVLYGFIA). Residues 216–266 (RILFLSPIPSDPKENSNTWKNDSTHQNKNLNSKTSNRYFNSTVSSRKQVTK) lie on the Cytoplasmic side of the membrane. Residues 267–288 (MLAVVVILFALLWMPYRTLVVV) traverse the membrane as a helical segment. Over 289 to 296 (NSFLSSPF) the chain is Extracellular. The chain crosses the membrane as a helical span at residues 297 to 319 (QENWFLLFCRICIYLNSAINPVI). The Cytoplasmic portion of the chain corresponds to 320–398 (YNLMSQKFRA…LASEVTFSQS (79 aa)).

Belongs to the G-protein coupled receptor 1 family.

It localises to the cell membrane. Its function is as follows. Receptor for thyrotropin-releasing hormone (TRH). Upon ligand binding, this G-protein-coupled receptor triggers activation of the phosphatidylinositol (IP3)-calcium-protein kinase C (PKC) pathway. The protein is Thyrotropin-releasing hormone receptor (TRHR) of Ovis aries (Sheep).